The sequence spans 124 residues: MADDLKRFLYKKLPSVEGLHAIVVSDRDGVPVIKVANDNAPEHALRPGFLSTFALATDQGSKLGLSKNKSIICYYNTYQVVQFNRLPLVVSFIASSNANTGLIVSLEKELTPLFEELRQVVEVS.

This sequence belongs to the LAMTOR3 family. Part of the Ragulator complex composed of LAMTOR1, LAMTOR2, LAMTOR3, LAMTOR4 and LAMTOR5. The Ragulator complex interacts with SLC38A9; the probable amino acid sensor. Component of the lysosomal folliculin complex (LFC).

The protein resides in the late endosome membrane. Functionally, as part of the Ragulator complex it is involved in amino acid sensing and activation of mTORC1, a signaling complex promoting cell growth in response to growth factors, energy levels, and amino acids. Activated by amino acids through a mechanism involving the lysosomal V-ATPase, the Ragulator plays a dual role for the small GTPases Rag (RagA/RRAGA, RagB/RRAGB, RagC/RRAGC and/or RagD/RRAGD): it (1) acts as a guanine nucleotide exchange factor (GEF), activating the small GTPases Rag and (2) mediates recruitment of Rag GTPases to the lysosome membrane. Activated Ragulator and Rag GTPases function as a scaffold recruiting mTORC1 to lysosomes where it is in turn activated. The polypeptide is Ragulator complex protein LAMTOR3 (LAMTOR3) (Gallus gallus (Chicken)).